Reading from the N-terminus, the 291-residue chain is MHLLTATVTPFFPNGTIDFASLERLLSFQDAVGNGVVLLGSTGEGLSLTKKEKQALICFACDLQLKVPLFVGTSGTLLEEVLDWIHFCNDLPISGFLMTTPIYTKPKLCGQILWFEAVLNAAKHPAILYNIPSRAATPLYLDTVKALAHHPQFLGIKDSGGSVEEFQSYKSIAPHIQLYCGDDVFWSEMAACGAHGLISVLSNAWPEEAREYVLNPQEQDYRSLWMETCRWVYTTTNPIGIKAILAYKKAITHAQLRLPLSIEDFDLENVSPAVESMLAWPKLRTSVFSYS.

Threonine 42 provides a ligand contact to pyruvate. Tyrosine 129 acts as the Proton donor/acceptor in catalysis. The active-site Schiff-base intermediate with substrate is lysine 157. Isoleucine 198 provides a ligand contact to pyruvate.

Belongs to the DapA family. As to quaternary structure, homotetramer; dimer of dimers.

The protein localises to the cytoplasm. It carries out the reaction L-aspartate 4-semialdehyde + pyruvate = (2S,4S)-4-hydroxy-2,3,4,5-tetrahydrodipicolinate + H2O + H(+). It participates in amino-acid biosynthesis; L-lysine biosynthesis via DAP pathway; (S)-tetrahydrodipicolinate from L-aspartate: step 3/4. Catalyzes the condensation of (S)-aspartate-beta-semialdehyde [(S)-ASA] and pyruvate to 4-hydroxy-tetrahydrodipicolinate (HTPA). The chain is 4-hydroxy-tetrahydrodipicolinate synthase from Chlamydia pneumoniae (Chlamydophila pneumoniae).